The sequence spans 275 residues: 2,3,4,5-tetrahydropyridine-2,6-dicarboxylate N-succinyltransferase (275 aa).

Residues Arg-104 and Asp-141 each contribute to the substrate site.

Belongs to the transferase hexapeptide repeat family. As to quaternary structure, homotrimer.

It localises to the cytoplasm. The enzyme catalyses (S)-2,3,4,5-tetrahydrodipicolinate + succinyl-CoA + H2O = (S)-2-succinylamino-6-oxoheptanedioate + CoA. It functions in the pathway amino-acid biosynthesis; L-lysine biosynthesis via DAP pathway; LL-2,6-diaminopimelate from (S)-tetrahydrodipicolinate (succinylase route): step 1/3. The polypeptide is 2,3,4,5-tetrahydropyridine-2,6-dicarboxylate N-succinyltransferase (Aeromonas hydrophila subsp. hydrophila (strain ATCC 7966 / DSM 30187 / BCRC 13018 / CCUG 14551 / JCM 1027 / KCTC 2358 / NCIMB 9240 / NCTC 8049)).